A 620-amino-acid chain; its full sequence is Chaperone protein HscA homolog (620 aa).

The protein belongs to the heat shock protein 70 family.

Its function is as follows. Chaperone involved in the maturation of iron-sulfur cluster-containing proteins. Has a low intrinsic ATPase activity which is markedly stimulated by HscB. This chain is Chaperone protein HscA homolog, found in Pseudomonas fluorescens (strain SBW25).